We begin with the raw amino-acid sequence, 542 residues long: Chaperonin GroEL 1 (542 aa).

Residues 29–32 (TLGP), 86–90 (DGTTT), glycine 413, 477–479 (NAA), and aspartate 493 contribute to the ATP site.

It belongs to the chaperonin (HSP60) family. Forms a cylinder of 14 subunits composed of two heptameric rings stacked back-to-back. Interacts with the co-chaperonin GroES.

It is found in the cytoplasm. It catalyses the reaction ATP + H2O + a folded polypeptide = ADP + phosphate + an unfolded polypeptide.. Functionally, together with its co-chaperonin GroES, plays an essential role in assisting protein folding. The GroEL-GroES system forms a nano-cage that allows encapsulation of the non-native substrate proteins and provides a physical environment optimized to promote and accelerate protein folding. The polypeptide is Chaperonin GroEL 1 (Kineococcus radiotolerans (strain ATCC BAA-149 / DSM 14245 / SRS30216)).